The chain runs to 145 residues: Ventricular natriuretic peptide (145 aa).

An N-terminal signal peptide occupies residues methionine 1 to alanine 24. An intrachain disulfide couples cysteine 117 to cysteine 133.

Belongs to the natriuretic peptide family. Heart atrium and ventricle, and to a very low extent in brain.

It is found in the secreted. Its function is as follows. Exhibits natriuretic and vasodepressor activity. This Acipenser transmontanus (White sturgeon) protein is Ventricular natriuretic peptide (vnp).